The following is a 683-amino-acid chain: Bifunctional lysine-specific demethylase and histidyl-hydroxylase NO66 (683 aa).

Residues 1–26 (MHKASTSSANRANFQGNHKTQKSPNN) are compositionally biased toward polar residues. Disordered stretches follow at residues 1-162 (MHKA…SPIQ) and 179-208 (AAGA…AAKS). Residues 54–65 (LTKEQKERRKMM) show a composition bias toward basic and acidic residues. A compositionally biased stretch (polar residues) spans 85–94 (IDTSASTSNK). Residues 95–108 (GKSKAARPTDRKRR) show a composition bias toward basic residues. A compositionally biased stretch (low complexity) spans 116 to 125 (PADANNNNTK). At Ser-152 the chain carries Phosphoserine. Thr-158 is modified (phosphothreonine). Ser-159 bears the Phosphoserine mark. Over residues 179–189 (AAGASGASGPA) the composition is skewed to low complexity. Residues 341–480 (NPSTYLVGLR…NLLEKLMPIV (140 aa)) form the JmjC domain. Fe cation contacts are provided by His-381, Asp-383, and His-446.

Belongs to the ROX family. NO66 subfamily. The cofactor is Fe(2+).

It is found in the nucleus. It catalyses the reaction N(6),N(6)-dimethyl-L-lysyl(36)-[histone H3] + 2 2-oxoglutarate + 2 O2 = L-lysyl(36)-[histone H3] + 2 formaldehyde + 2 succinate + 2 CO2. Oxygenase that can act as both a histone lysine demethylase and a ribosomal histidine hydroxylase. Specifically demethylates 'Lys-4' (H3K4me) and 'Lys-36' (H3K36me) of histone H3, thereby playing a central role in histone code. This Drosophila yakuba (Fruit fly) protein is Bifunctional lysine-specific demethylase and histidyl-hydroxylase NO66.